The primary structure comprises 312 residues: Methionyl-tRNA formyltransferase (312 aa).

A (6S)-5,6,7,8-tetrahydrofolate-binding site is contributed by 112 to 115 (SLLP).

It belongs to the Fmt family.

The catalysed reaction is L-methionyl-tRNA(fMet) + (6R)-10-formyltetrahydrofolate = N-formyl-L-methionyl-tRNA(fMet) + (6S)-5,6,7,8-tetrahydrofolate + H(+). Its function is as follows. Attaches a formyl group to the free amino group of methionyl-tRNA(fMet). The formyl group appears to play a dual role in the initiator identity of N-formylmethionyl-tRNA by promoting its recognition by IF2 and preventing the misappropriation of this tRNA by the elongation apparatus. The sequence is that of Methionyl-tRNA formyltransferase from Dehalococcoides mccartyi (strain CBDB1).